A 447-amino-acid chain; its full sequence is Methylenetetrahydrofolate--tRNA-(uracil-5-)-methyltransferase TrmFO (447 aa).

Position 10–15 (10–15 (GAGLAG)) interacts with FAD.

This sequence belongs to the MnmG family. TrmFO subfamily. FAD is required as a cofactor.

It is found in the cytoplasm. The catalysed reaction is uridine(54) in tRNA + (6R)-5,10-methylene-5,6,7,8-tetrahydrofolate + NADH + H(+) = 5-methyluridine(54) in tRNA + (6S)-5,6,7,8-tetrahydrofolate + NAD(+). The enzyme catalyses uridine(54) in tRNA + (6R)-5,10-methylene-5,6,7,8-tetrahydrofolate + NADPH + H(+) = 5-methyluridine(54) in tRNA + (6S)-5,6,7,8-tetrahydrofolate + NADP(+). In terms of biological role, catalyzes the folate-dependent formation of 5-methyl-uridine at position 54 (M-5-U54) in all tRNAs. This is Methylenetetrahydrofolate--tRNA-(uracil-5-)-methyltransferase TrmFO from Symbiobacterium thermophilum (strain DSM 24528 / JCM 14929 / IAM 14863 / T).